The primary structure comprises 485 residues: MPAMVEKGPEVSGKRRGRNNAAASASAAAASAAASAACASPAATAASGAAASSASAAAASAAAAPNNGQNKSLAAAAPNGNSSSNSWEEGSSGSSSDEEHGGGGMRVGPQYQAVVPDFDPAKLARRSQERDNLGMLVWSPNQNLSEAKLDEYIAIAKEKHGYNMEQALGMLFWHKHNIEKSLADLPNFTPFPDEWTVEDKVLFEQAFSFHGKTFHRIQQMLPDKSIASLVKFYYSWKKTRTKTSVMDRHARKQKREREESEDELEEANGNNPIDIEVDQNKESKKEVPPTETVPQVKKEKHSTQAKNRAKRKPPKGMFLSQEDVEAVSANATAATTVLRQLDMELVSVKRQIQNIKQTNSALKEKLDGGIEPYRLPEVIQKCNARWTTEEQLLAVQAIRKYGRDFQAISDVIGNKSVVQVKNFFVNYRRRFNIDEVLQEWEAEHGKEETNGPSNQKPVKSPDNSIKMPEEEDEAPVLDVRYASAS.

Disordered stretches follow at residues M1 to S26 and A49 to Q110. Low complexity-rich tracts occupy residues A49–A64 and A74–S95. The interval P78–R257 is interaction with HDAC1. In terms of domain architecture, ELM2 spans G103–T189. K122 participates in a covalent cross-link: Glycyl lysine isopeptide (Lys-Gly) (interchain with G-Cter in SUMO2). Phosphoserine is present on S127. An SANT 1 domain is found at P190–T241. Residues S244–I273 adopt a coiled-coil conformation. Residues S244–P314 are disordered. Phosphoserine is present on S260. Over residues D278–P288 the composition is skewed to basic and acidic residues. Residues V296 to A384 form an interaction with KDM1A region. K297 is covalently cross-linked (Glycyl lysine isopeptide (Lys-Gly) (interchain with G-Cter in SUMO2)). Positions A334–G369 form a coiled coil. In terms of domain architecture, SANT 2 spans K381–N432. The tract at residues A442–S485 is disordered. The span at N450–N463 shows a compositional bias: polar residues. S460 carries the phosphoserine modification. A Glycyl lysine isopeptide (Lys-Gly) (interchain with G-Cter in SUMO2) cross-link involves residue K466.

It belongs to the CoREST family. As to quaternary structure, interacts directly with GFI1 and GFI1B in a RCOR/GFI/KDM1A/HDAC complex. Interacts with INMS1. Component of a BHC histone deacetylase complex that contains HDAC1, HDAC2, HMG20B/BRAF35, KDM1A, RCOR1/CoREST and PHF21A/BHC80. The BHC complex may also contain ZMYM2, ZNF217, ZMYM3, GSE1 and GTF2I. Interacts with REST. Interacts with the SMARCE1/BAF57, suggesting that the BHC complex may recruit the ATP-dependent chromatin-remodeling SWI-SNF complex. Interacts with SOX2. (Microbial infection) Interacts with herpes virus HSV-1 ICP0 protein; the interaction leads to the disruption of the BHC complex, thereby preventing the BHC complex from repressing transcription of viral genes. Phosphorylated by HSV-1 protein kinases in case of infection. In terms of tissue distribution, ubiquitously expressed.

It is found in the nucleus. Essential component of the BHC complex, a corepressor complex that represses transcription of neuron-specific genes in non-neuronal cells. The BHC complex is recruited at RE1/NRSE sites by REST and acts by deacetylating and demethylating specific sites on histones, thereby acting as a chromatin modifier. In the BHC complex, it serves as a molecular beacon for the recruitment of molecular machinery, including MeCP2 and SUV39H1, that imposes silencing across a chromosomal interval. Plays a central role in demethylation of Lys-4 of histone H3 by promoting demethylase activity of KDM1A on core histones and nucleosomal substrates. It also protects KDM1A from the proteasome. Component of a RCOR/GFI/KDM1A/HDAC complex that suppresses, via histone deacetylase (HDAC) recruitment, a number of genes implicated in multilineage blood cell development and controls hematopoietic differentiation. This Homo sapiens (Human) protein is REST corepressor 1 (RCOR1).